The following is a 341-amino-acid chain: uncharacterized protein (341 aa).

Residue 58–82 (ITGGSSGIGAAAAKKIAEAGGTVVL) participates in NADP(+) binding. S194 is a binding site for substrate. The active-site Proton acceptor is Y207. Residues 309–329 (DSSAAKGSESQTDTSELDKRS) form a disordered region.

Belongs to the short-chain dehydrogenases/reductases (SDR) family.

This is an uncharacterized protein from Mycobacterium bovis (strain ATCC BAA-935 / AF2122/97).